The primary structure comprises 344 residues: Inositol 2-dehydrogenase/D-chiro-inositol 3-dehydrogenase (344 aa).

It belongs to the Gfo/Idh/MocA family. In terms of assembly, homotetramer.

The catalysed reaction is myo-inositol + NAD(+) = scyllo-inosose + NADH + H(+). It carries out the reaction 1D-chiro-inositol + NAD(+) = scyllo-inosine + NADH + H(+). The protein operates within polyol metabolism; myo-inositol degradation into acetyl-CoA; acetyl-CoA from myo-inositol: step 1/7. Functionally, involved in the oxidation of myo-inositol (MI) and D-chiro-inositol (DCI) to 2-keto-myo-inositol (2KMI or 2-inosose) and 1-keto-D-chiro-inositol (1KDCI), respectively. Can also use D-glucose and D-xylose, and shows a trace of activity with D-ribose and D-fructose. This is Inositol 2-dehydrogenase/D-chiro-inositol 3-dehydrogenase (iolG) from Bacillus subtilis (strain 168).